The primary structure comprises 188 residues: Elongation factor P (188 aa).

Residue Lys-34 is modified to N6-(3,6-diaminohexanoyl)-5-hydroxylysine.

It belongs to the elongation factor P family. In terms of processing, may be beta-lysylated on the epsilon-amino group of Lys-34 by the combined action of EpmA and EpmB, and then hydroxylated on the C5 position of the same residue by EpmC (if this protein is present). Lysylation is critical for the stimulatory effect of EF-P on peptide-bond formation. The lysylation moiety may extend toward the peptidyltransferase center and stabilize the terminal 3-CCA end of the tRNA. Hydroxylation of the C5 position on Lys-34 may allow additional potential stabilizing hydrogen-bond interactions with the P-tRNA.

The protein resides in the cytoplasm. The protein operates within protein biosynthesis; polypeptide chain elongation. Involved in peptide bond synthesis. Alleviates ribosome stalling that occurs when 3 or more consecutive Pro residues or the sequence PPG is present in a protein, possibly by augmenting the peptidyl transferase activity of the ribosome. Modification of Lys-34 is required for alleviation. This chain is Elongation factor P, found in Pseudoalteromonas translucida (strain TAC 125).